We begin with the raw amino-acid sequence, 684 residues long: MAEGEDVLPLPTSSGDGWEKDLEEALEAGGCDLETLRNIIQGRPLPADLRAKVWKIALNVAGKGDSLASWDGILDLPEQNTIHKDCLQFIDQLSVPEEKAAELLLDIESVITFYCKSRNIKYSTSLSWIHLLKPLVHLQLPRSDLYNCFYAIMNKYIPRDCSQKGRPFHLFRLLIQYHEPELCSYLDTKKITPDSYALNWLGSLFACYCSIEVTQAIWDGYLQQADPFFIYFLMLIILVNAKEVILTQESDSKEEVIQFLENTPSSLNIEDIEDLFSLAQYYCSKTPASFRKDNHHLFGSTLLGIKDDDADLSQALCLAISVSEILQANQLQGEGVRFFVVDCRPAEQYNAGHLSTAFHLDSDLMLQNPSEFAQSVKSLLEAQKQSIESGSIAGGEHLCFMGSGREEEDMYMNMVLAHFLQKNKEYVSIASGGFMALQQHLADINVDGPENGYGHWIASTSGSRSSINSVDGESPNGSSDRGMKSLVNKMTVALKTKSVNVWEKVISFIENTSTPVDRHVSSSDRVGKPYRGVKPVFSIGDEEEYDTDEIDSSSMSDDDRKEVVNIQTWINKPDVKHHFPCKEVKESGHMFPSHLLVTATHMYCLREIVSRKGLAYIQSRQALNSVVKITSKKKHPELITFKYGNSSASGIEILAIERYLIPNAGDATKAIKQQIMKVLDALES.

One can recognise a Rab-GAP TBC domain in the interval 44-225; the sequence is PLPADLRAKV…AIWDGYLQQA (182 aa). Serine 300 is subject to Phosphoserine. One can recognise a Rhodanese domain in the interval 334–446; that stretch reads EGVRFFVVDC…LQQHLADINV (113 aa). The segment covering 459 to 479 has biased composition (polar residues); it reads STSGSRSSINSVDGESPNGSS. The interval 459–482 is disordered; it reads STSGSRSSINSVDGESPNGSSDRG. 3 positions are modified to phosphoserine: serine 469, serine 474, and serine 507. Phosphothreonine is present on threonine 514. The segment at 514–558 is may mediate the interaction with C17orf75, FAM91A1 and WDR11; that stretch reads TPVDRHVSSSDRVGKPYRGVKPVFSIGDEEEYDTDEIDSSSMSDD. The tract at residues 514–684 is may mediate the interaction with WASHC1; that stretch reads TPVDRHVSSS…IMKVLDALES (171 aa). Serine 556 carries the phosphoserine modification. A may mediate the interaction with FKBP15 and WASHC2; required for endosome to Golgi trafficking region spans residues 559 to 684; the sequence is DRKEVVNIQT…IMKVLDALES (126 aa).

In terms of assembly, directly interacts with GOLGA1 and GOLGA4. Interacts with FAM91A1, C17ORF75 and WDR11; the interaction recruits TBC1D23 to AP-1-derived vesicles. Directly interacts with WASHC1 and WASHC2A/FAM21A. Interacts with FKBP15.

It localises to the golgi apparatus. The protein localises to the trans-Golgi network. It is found in the cytoplasmic vesicle. Putative Rab GTPase-activating protein which plays a role in vesicular trafficking. Involved in endosome-to-Golgi trafficking. Acts as a bridging protein by binding simultaneously to golgins, including GOLGA1 and GOLGA4, located at the trans-Golgi, and to the WASH complex, located on endosome-derived vesicles. Together with WDR11 complex facilitates the golgin-mediated capture of vesicles generated using AP-1. Plays a role in brain development, including in cortical neuron positioning. May also be important for neurite outgrowth, possibly through its involvement in membrane trafficking and cargo delivery, 2 processes that are essential for axonal and dendritic growth. May act as a general inhibitor of innate immunity signaling, strongly inhibiting multiple TLR and dectin/CLEC7A-signaling pathways. Does not alter initial activation events, but instead affects maintenance of inflammatory gene expression several hours after bacterial lipopolysaccharide (LPS) challenge. This Pongo abelii (Sumatran orangutan) protein is TBC1 domain family member 23 (TBC1D23).